Consider the following 180-residue polypeptide: ATP synthase subunit delta (180 aa).

This sequence belongs to the ATPase delta chain family. As to quaternary structure, F-type ATPases have 2 components, F(1) - the catalytic core - and F(0) - the membrane proton channel. F(1) has five subunits: alpha(3), beta(3), gamma(1), delta(1), epsilon(1). F(0) has three main subunits: a(1), b(2) and c(10-14). The alpha and beta chains form an alternating ring which encloses part of the gamma chain. F(1) is attached to F(0) by a central stalk formed by the gamma and epsilon chains, while a peripheral stalk is formed by the delta and b chains.

It is found in the cell inner membrane. Functionally, f(1)F(0) ATP synthase produces ATP from ADP in the presence of a proton or sodium gradient. F-type ATPases consist of two structural domains, F(1) containing the extramembraneous catalytic core and F(0) containing the membrane proton channel, linked together by a central stalk and a peripheral stalk. During catalysis, ATP synthesis in the catalytic domain of F(1) is coupled via a rotary mechanism of the central stalk subunits to proton translocation. In terms of biological role, this protein is part of the stalk that links CF(0) to CF(1). It either transmits conformational changes from CF(0) to CF(1) or is implicated in proton conduction. The sequence is that of ATP synthase subunit delta from Parabacteroides distasonis (strain ATCC 8503 / DSM 20701 / CIP 104284 / JCM 5825 / NCTC 11152).